The chain runs to 231 residues: Protein crossbronx homolog (231 aa).

The UBC core domain maps to leucine 14–alanine 168.

This sequence belongs to the ubiquitin-conjugating enzyme family. FTS subfamily.

This Culex quinquefasciatus (Southern house mosquito) protein is Protein crossbronx homolog.